The primary structure comprises 355 residues: Phosphoribosylformylglycinamidine cyclo-ligase (355 aa).

Belongs to the AIR synthase family.

It localises to the cytoplasm. It catalyses the reaction 2-formamido-N(1)-(5-O-phospho-beta-D-ribosyl)acetamidine + ATP = 5-amino-1-(5-phospho-beta-D-ribosyl)imidazole + ADP + phosphate + H(+). The protein operates within purine metabolism; IMP biosynthesis via de novo pathway; 5-amino-1-(5-phospho-D-ribosyl)imidazole from N(2)-formyl-N(1)-(5-phospho-D-ribosyl)glycinamide: step 2/2. The sequence is that of Phosphoribosylformylglycinamidine cyclo-ligase from Methylobacterium sp. (strain 4-46).